A 239-amino-acid chain; its full sequence is tRNA (guanine-N(7)-)-methyltransferase (239 aa).

E69, E94, D121, and D144 together coordinate S-adenosyl-L-methionine. D144 is an active-site residue. K148 is a binding site for substrate. The interaction with RNA stretch occupies residues 150 to 155 (RHNKRR). Substrate contacts are provided by residues D180 and 217–220 (TKFE).

Belongs to the class I-like SAM-binding methyltransferase superfamily. TrmB family. Monomer.

It carries out the reaction guanosine(46) in tRNA + S-adenosyl-L-methionine = N(7)-methylguanosine(46) in tRNA + S-adenosyl-L-homocysteine. It functions in the pathway tRNA modification; N(7)-methylguanine-tRNA biosynthesis. Its function is as follows. Catalyzes the formation of N(7)-methylguanine at position 46 (m7G46) in tRNA. The polypeptide is tRNA (guanine-N(7)-)-methyltransferase (Yersinia pestis (strain Pestoides F)).